Here is a 538-residue protein sequence, read N- to C-terminus: Translation initiation factor IF-3, chloroplastic (538 aa).

The transit peptide at Met1–Phe140 directs the protein to the chloroplast. A head region spans residues Ser141 to Leu290. Disordered stretches follow at residues Ala146–Lys165 and Arg188–Ser210. The segment at Ser291 to Glu474 is IF-3 like. A disordered region spans residues Ala484–Ser538. Residues Glu493–Glu530 show a composition bias toward acidic residues.

It belongs to the IF-3 family. As to quaternary structure, monomer. The N-terminus is blocked.

The protein resides in the plastid. The protein localises to the chloroplast. In terms of biological role, involved in chloroplast protein synthesis. It enhances the poly(A,U,G)-dependent binding of the initiator tRNA to chloroplast 30S subunits. This is Translation initiation factor IF-3, chloroplastic from Euglena gracilis.